A 312-amino-acid polypeptide reads, in one-letter code: tRNA pseudouridine synthase B (312 aa).

The active-site Nucleophile is aspartate 37.

Belongs to the pseudouridine synthase TruB family. Type 1 subfamily.

The catalysed reaction is uridine(55) in tRNA = pseudouridine(55) in tRNA. Its function is as follows. Responsible for synthesis of pseudouridine from uracil-55 in the psi GC loop of transfer RNAs. The protein is tRNA pseudouridine synthase B of Deinococcus geothermalis (strain DSM 11300 / CIP 105573 / AG-3a).